A 314-amino-acid chain; its full sequence is Probable cell division protein WhiA (314 aa).

The H-T-H motif DNA-binding region spans 275 to 309 (SLKELGELVTSGAISKSGVNHRLKKIDEFAEKIKR).

This sequence belongs to the WhiA family.

Involved in cell division and chromosome segregation. The polypeptide is Probable cell division protein WhiA (Oceanobacillus iheyensis (strain DSM 14371 / CIP 107618 / JCM 11309 / KCTC 3954 / HTE831)).